The following is a 155-amino-acid chain: Molybdopterin synthase catalytic subunit 1 (155 aa).

Residues 101–102, Lys117, and 124–126 each bind substrate; these read HR and KKE.

The protein belongs to the MoaE family. MOCS2B subfamily. In terms of assembly, heterotetramer; composed of 2 small (MOCS2A) and 2 large (MOCS2B) subunits.

It localises to the cytoplasm. The catalysed reaction is 2 [molybdopterin-synthase sulfur-carrier protein]-C-terminal-Gly-aminoethanethioate + cyclic pyranopterin phosphate + H2O = molybdopterin + 2 [molybdopterin-synthase sulfur-carrier protein]-C-terminal Gly-Gly + 2 H(+). The protein operates within cofactor biosynthesis; molybdopterin biosynthesis. Catalytic subunit of the molybdopterin synthase complex, a complex that catalyzes the conversion of precursor Z into molybdopterin. Acts by mediating the incorporation of 2 sulfur atoms from thiocarboxylated MOCS2A into precursor Z to generate a dithiolene group. The sequence is that of Molybdopterin synthase catalytic subunit 1 from Aedes aegypti (Yellowfever mosquito).